A 355-amino-acid chain; its full sequence is RNA 3'-terminal phosphate cyclase (355 aa).

ATP-binding positions include Gln-100 and 300-304 (HLADQ). His-325 serves as the catalytic Tele-AMP-histidine intermediate.

Belongs to the RNA 3'-terminal cyclase family. Type 1 subfamily.

It localises to the cytoplasm. The enzyme catalyses a 3'-end 3'-phospho-ribonucleotide-RNA + ATP = a 3'-end 2',3'-cyclophospho-ribonucleotide-RNA + AMP + diphosphate. Functionally, catalyzes the conversion of 3'-phosphate to a 2',3'-cyclic phosphodiester at the end of RNA. The mechanism of action of the enzyme occurs in 3 steps: (A) adenylation of the enzyme by ATP; (B) transfer of adenylate to an RNA-N3'P to produce RNA-N3'PP5'A; (C) and attack of the adjacent 2'-hydroxyl on the 3'-phosphorus in the diester linkage to produce the cyclic end product. The biological role of this enzyme is unknown but it is likely to function in some aspects of cellular RNA processing. The polypeptide is RNA 3'-terminal phosphate cyclase (Methanosarcina acetivorans (strain ATCC 35395 / DSM 2834 / JCM 12185 / C2A)).